An 82-amino-acid polypeptide reads, in one-letter code: Small ribosomal subunit protein uS17 (82 aa).

Belongs to the universal ribosomal protein uS17 family. As to quaternary structure, part of the 30S ribosomal subunit.

In terms of biological role, one of the primary rRNA binding proteins, it binds specifically to the 5'-end of 16S ribosomal RNA. This Aeromonas salmonicida (strain A449) protein is Small ribosomal subunit protein uS17.